A 432-amino-acid chain; its full sequence is Repulsive guidance molecule A (432 aa).

The N-terminal stretch at 1–29 (MGRGAGSTALGLFQILPVFLCIFPPVTSP) is a signal peptide. Positions 30 to 149 (CKILKCNSEF…NYTHCGLFGD (120 aa)) are cleaved as a propeptide — removed in mature form. N-linked (GlcNAc...) asparagine glycosylation occurs at asparagine 96. The segment at 99 to 122 (KDGPTSQPRLRTLPPGDSQERSDS) is disordered. Disulfide bonds link cysteine 126–cysteine 207 and cysteine 144–cysteine 296. Residue asparagine 140 is glycosylated (N-linked (GlcNAc...) asparagine). Residue asparagine 404 is the site of GPI-anchor amidated asparagine attachment. A propeptide spans 405–432 (AAPSEHPWALPALWVALLSLSQCWLGLL) (removed in mature form).

It belongs to the repulsive guidance molecule (RGM) family. Autocatalytically cleaved at low pH; the two chains remain linked via two disulfide bonds.

It localises to the cell membrane. Its function is as follows. Acts as an axon-specific repulsive guidance molecule in the retinotectal system. Repulsive for a subset of axons of the temporal half of the retina. Provides thus positional information for the temporal axons invading the optic tectum in the stratum opticum. The chain is Repulsive guidance molecule A (RGMA) from Gallus gallus (Chicken).